Reading from the N-terminus, the 437-residue chain is uncharacterized protein (437 aa).

Positions 63–87 are enriched in polar residues; that stretch reads PSSANVSFQNSDDNLSTSRGRSASP. Disordered regions lie at residues 63-97, 112-147, and 346-437; these read PSSA…SNFP, VKKD…KKET, and PKNA…YSIW. Residues 399–409 are compositionally biased toward polar residues; the sequence is EALSPSKSNPD. Residues 425 to 437 are compositionally biased toward low complexity; it reads KKPSSSSSNYSIW.

This is an uncharacterized protein from Caenorhabditis elegans.